The sequence spans 603 residues: MTDVPAVRIRNFCIIAHIDHGKSTLADRLLQATGTVEDRKMKEQFLDNMDLERERGITIKLQAARMNYTAKDGQQYVLNLIDTPGHVDFSYEVSRSLVACEGALLVVDASQGVEAQTLANVYLALENNLEIIPVLNKIDLPGAEPERVIGEIEEIIGLDCSGAILASAKEGLGIDEILEAVVERIPPPPNTINERLRALIFDSYYDSYRGVIVYFRVMDGTVRKGDRIHLMASGKEFEIDELGVLSPTQKQVEELHAGEVGYLGAAIRAVADARVGDTITLSKAKAESPLPGYAEANPMVYCGMFPIDADQFEDLREALEKLELNDAALHYEPETSSAMGFGFRCGFLGLLHMEIVQERLEREYNLDLIITAPSVVYKVITLKGEELYIDNPSRLPSPNDRQRIEEPYVQVEMITPETYVGSLMELSQNRRGIFKDMKYLAQGRTTLTYELPLAEVVTDFFDQMKSRSRGYASMEYHLIGYRENPLVKLDIMINGDPVDSLAMIVHRDKAYNVGRAMAEKLKELIPRHQFKVPIQASIGSKVIASEHIPALRKDVLAKCYGGDISRKKKLLQKQAKGKKRMKSVGTVDVPQEAFMAVLRLDQS.

The tr-type G domain occupies 7–189 (VRIRNFCIIA…AVVERIPPPP (183 aa)). Residues 19-24 (DHGKST) and 136-139 (NKID) each bind GTP.

The protein belongs to the TRAFAC class translation factor GTPase superfamily. Classic translation factor GTPase family. LepA subfamily.

It is found in the cell inner membrane. It catalyses the reaction GTP + H2O = GDP + phosphate + H(+). In terms of biological role, required for accurate and efficient protein synthesis under certain stress conditions. May act as a fidelity factor of the translation reaction, by catalyzing a one-codon backward translocation of tRNAs on improperly translocated ribosomes. Back-translocation proceeds from a post-translocation (POST) complex to a pre-translocation (PRE) complex, thus giving elongation factor G a second chance to translocate the tRNAs correctly. Binds to ribosomes in a GTP-dependent manner. In Nostoc punctiforme (strain ATCC 29133 / PCC 73102), this protein is Elongation factor 4.